Reading from the N-terminus, the 375-residue chain is Chaperone protein DnaJ (375 aa).

In terms of domain architecture, J spans 5 to 70 (DYYEVLGVSR…EKRARYDRFG (66 aa)). Residues 136-214 (GDEVTLRIPK…CRGAGQVQDI (79 aa)) form a CR-type zinc finger. Positions 149, 152, 166, 169, 188, 191, 202, and 205 each coordinate Zn(2+). CXXCXGXG motif repeat units lie at residues 149 to 156 (CPDCSGSG), 166 to 173 (CPQCGGSG), 188 to 195 (CSACRGEG), and 202 to 209 (CPRCRGAG).

It belongs to the DnaJ family. Homodimer. Requires Zn(2+) as cofactor.

The protein resides in the cytoplasm. In terms of biological role, participates actively in the response to hyperosmotic and heat shock by preventing the aggregation of stress-denatured proteins and by disaggregating proteins, also in an autonomous, DnaK-independent fashion. Unfolded proteins bind initially to DnaJ; upon interaction with the DnaJ-bound protein, DnaK hydrolyzes its bound ATP, resulting in the formation of a stable complex. GrpE releases ADP from DnaK; ATP binding to DnaK triggers the release of the substrate protein, thus completing the reaction cycle. Several rounds of ATP-dependent interactions between DnaJ, DnaK and GrpE are required for fully efficient folding. Also involved, together with DnaK and GrpE, in the DNA replication of plasmids through activation of initiation proteins. The polypeptide is Chaperone protein DnaJ (Oleidesulfovibrio alaskensis (strain ATCC BAA-1058 / DSM 17464 / G20) (Desulfovibrio alaskensis)).